Here is a 419-residue protein sequence, read N- to C-terminus: Tyrosine--tRNA ligase (419 aa).

Residue Tyr-42 participates in L-tyrosine binding. The short motif at Ala-47–Ser-56 is the 'HIGH' region element. Residues Tyr-179 and Gln-183 each coordinate L-tyrosine. Residues Lys-239–Thr-243 carry the 'KMSKS' region motif. Lys-242 is a binding site for ATP. The region spanning Ile-353–Pro-418 is the S4 RNA-binding domain.

It belongs to the class-I aminoacyl-tRNA synthetase family. TyrS type 1 subfamily. Homodimer.

The protein localises to the cytoplasm. It catalyses the reaction tRNA(Tyr) + L-tyrosine + ATP = L-tyrosyl-tRNA(Tyr) + AMP + diphosphate + H(+). Catalyzes the attachment of tyrosine to tRNA(Tyr) in a two-step reaction: tyrosine is first activated by ATP to form Tyr-AMP and then transferred to the acceptor end of tRNA(Tyr). The protein is Tyrosine--tRNA ligase of Caulobacter sp. (strain K31).